The following is a 250-amino-acid chain: Mediator of RNA polymerase II transcription subunit 6 (250 aa).

Residues Lys-166–Gln-250 are disordered. Acidic residues predominate over residues Pro-204–Glu-223. Over residues Thr-224 to Phe-239 the composition is skewed to basic and acidic residues.

It belongs to the Mediator complex subunit 6 family. Component of the Mediator complex. Interacts with let-19/mdt-13. Interacts with RNA polymerase II. Interacts with mdt-28.

The protein resides in the nucleus. Its function is as follows. Component of the Mediator complex, a coactivator involved in the regulated transcription of nearly all RNA polymerase II-dependent genes. Mediator functions as a bridge to convey information from gene-specific regulatory proteins to the basal RNA polymerase II transcription machinery. Mediator is recruited to promoters by direct interactions with regulatory proteins and serves as a scaffold for the assembly of a functional preinitiation complex with RNA polymerase II and the general transcription factors. Acts to repress beta-catenin target genes. Required for asymmetric division of T-cells and for gonad and germ cell development. In Caenorhabditis elegans, this protein is Mediator of RNA polymerase II transcription subunit 6 (mdt-6).